The primary structure comprises 77 residues: Translation initiation factor IF-1, chloroplastic (77 aa).

The region spanning 1-71 (MKEQKWIHEG…TKGRIIYRIR (71 aa)) is the S1-like domain.

This sequence belongs to the IF-1 family. In terms of assembly, component of the 30S ribosomal translation pre-initiation complex which assembles on the 30S ribosome in the order IF-2 and IF-3, IF-1 and N-formylmethionyl-tRNA(fMet); mRNA recruitment can occur at any time during PIC assembly.

Its subcellular location is the plastid. It localises to the chloroplast. In terms of biological role, one of the essential components for the initiation of protein synthesis. Stabilizes the binding of IF-2 and IF-3 on the 30S subunit to which N-formylmethionyl-tRNA(fMet) subsequently binds. Helps modulate mRNA selection, yielding the 30S pre-initiation complex (PIC). Upon addition of the 50S ribosomal subunit IF-1, IF-2 and IF-3 are released leaving the mature 70S translation initiation complex. The protein is Translation initiation factor IF-1, chloroplastic of Vitis vinifera (Grape).